Here is a 210-residue protein sequence, read N- to C-terminus: Uracil phosphoribosyltransferase (210 aa).

Residues Arg77, Arg102, and Asp129 to Ser137 each bind 5-phospho-alpha-D-ribose 1-diphosphate. Uracil contacts are provided by residues Ile195 and Gly200 to Ala202. Asp201 serves as a coordination point for 5-phospho-alpha-D-ribose 1-diphosphate.

It belongs to the UPRTase family. It depends on Mg(2+) as a cofactor.

It catalyses the reaction UMP + diphosphate = 5-phospho-alpha-D-ribose 1-diphosphate + uracil. Its pathway is pyrimidine metabolism; UMP biosynthesis via salvage pathway; UMP from uracil: step 1/1. With respect to regulation, allosterically activated by GTP. Catalyzes the conversion of uracil and 5-phospho-alpha-D-ribose 1-diphosphate (PRPP) to UMP and diphosphate. The protein is Uracil phosphoribosyltransferase of Mycoplasmoides gallisepticum (strain R(low / passage 15 / clone 2)) (Mycoplasma gallisepticum).